The chain runs to 666 residues: Protein-arginine deiminase type-4 (666 aa).

Ca(2+)-binding residues include asparagine 153, aspartate 155, aspartate 165, aspartate 168, aspartate 176, and aspartate 179. 2 positions are modified to citrulline: arginine 212 and arginine 218. Glutamine 349 provides a ligand contact to Ca(2+). Aspartate 350 is an active-site residue. Glutamate 351, glutamate 353, aspartate 369, and serine 370 together coordinate Ca(2+). Residues arginine 372, arginine 374, and arginine 383 each carry the citrulline modification. Arginine 374 contributes to the substrate binding site. The Ca(2+) site is built by phenylalanine 407, leucine 410, and glutamate 411. Active-site residues include histidine 471, aspartate 473, and cysteine 648.

Belongs to the protein arginine deiminase family. Ca(2+) serves as cofactor. Autocitrullination at Arg-372 and Arg-374 inactivates the enzyme. Epidermis.

It is found in the cytoplasm. The protein resides in the nucleus. Its subcellular location is the cytoplasmic granule. It catalyses the reaction L-arginyl-[protein] + H2O = L-citrullyl-[protein] + NH4(+). Its function is as follows. Catalyzes the citrullination/deimination of arginine residues of proteins such as histones, thereby playing a key role in histone code and regulation of stem cell maintenance. Citrullinates histone H1 at 'Arg-54' (to form H1R54ci), histone H3 at 'Arg-2', 'Arg-8', 'Arg-17' and/or 'Arg-26' (to form H3R2ci, H3R8ci, H3R17ci, H3R26ci, respectively) and histone H4 at 'Arg-3' (to form H4R3ci). Acts as a key regulator of stem cell maintenance by mediating citrullination of histone H1: citrullination of 'Arg-54' of histone H1 (H1R54ci) results in H1 displacement from chromatin and global chromatin decondensation, thereby promoting pluripotency and stem cell maintenance. Promotes profound chromatin decondensation during the innate immune response to infection in neutrophils by mediating formation of H1R54ci. Required for the formation of neutrophil extracellular traps (NETs); NETs are mainly composed of DNA fibers and are released by neutrophils to bind pathogens during inflammation. Citrullination of histone H3 prevents their methylation by CARM1 and HRMT1L2/PRMT1 and represses transcription. Citrullinates EP300/P300 at 'Arg-2142', which favors its interaction with NCOA2/GRIP1. This Rattus norvegicus (Rat) protein is Protein-arginine deiminase type-4 (Padi4).